Here is a 481-residue protein sequence, read N- to C-terminus: Proline--tRNA ligase (481 aa).

Belongs to the class-II aminoacyl-tRNA synthetase family. ProS type 3 subfamily. In terms of assembly, homodimer.

It is found in the cytoplasm. The enzyme catalyses tRNA(Pro) + L-proline + ATP = L-prolyl-tRNA(Pro) + AMP + diphosphate. Functionally, catalyzes the attachment of proline to tRNA(Pro) in a two-step reaction: proline is first activated by ATP to form Pro-AMP and then transferred to the acceptor end of tRNA(Pro). The protein is Proline--tRNA ligase of Chlorobium phaeovibrioides (strain DSM 265 / 1930) (Prosthecochloris vibrioformis (strain DSM 265)).